The following is a 423-amino-acid chain: CinA-like protein (423 aa).

The protein belongs to the CinA family.

This Chlorobaculum tepidum (strain ATCC 49652 / DSM 12025 / NBRC 103806 / TLS) (Chlorobium tepidum) protein is CinA-like protein.